A 365-amino-acid chain; its full sequence is Probable protein kinase At2g41970 (365 aa).

Positions 1–50 (MFCCGGADEEPAGPPANQYAAPPNKAGNPNFGGGNRGEPRNPNAPRSGAP) are disordered. Residues 73-354 (FGNKALIGEG…IVVKALQPLL (282 aa)) enclose the Protein kinase domain. Residues 79–87 (IGEGSYGRV) and lysine 100 contribute to the ATP site. Tyrosine 146 bears the Phosphotyrosine mark. Aspartate 204 (proton acceptor) is an active-site residue. Serine 208 and serine 238 each carry phosphoserine. Threonine 239 and threonine 244 each carry phosphothreonine. The residue at position 252 (tyrosine 252) is a Phosphotyrosine.

Belongs to the protein kinase superfamily. Tyr protein kinase family.

The sequence is that of Probable protein kinase At2g41970 from Arabidopsis thaliana (Mouse-ear cress).